Reading from the N-terminus, the 429-residue chain is Inner membrane transport protein RhmT (429 aa).

Residues methionine 1 to arginine 16 are Cytoplasmic-facing. Residues leucine 17–phenylalanine 37 form a helical membrane-spanning segment. At alanine 38–alanine 54 the chain is on the periplasmic side. Residues leucine 55–methionine 75 traverse the membrane as a helical segment. Residues arginine 76–arginine 81 lie on the Cytoplasmic side of the membrane. The chain crosses the membrane as a helical span at residues threonine 82 to aspartate 102. The Periplasmic portion of the chain corresponds to threonine 103–glycine 143. The helical transmembrane segment at leucine 144 to leucine 164 threads the bilayer. The Cytoplasmic portion of the chain corresponds to glutamate 165–glycine 174. A helical transmembrane segment spans residues tryptophan 175 to phenylalanine 195. Topologically, residues tryptophan 196–glutamine 242 are periplasmic. A helical membrane pass occupies residues leucine 243–threonine 263. Residues glutamine 264 to glycine 274 lie on the Cytoplasmic side of the membrane. Residues phenylalanine 275 to isoleucine 295 traverse the membrane as a helical segment. Over proline 296–glycine 324 the chain is Periplasmic. Residues leucine 325–valine 345 form a helical membrane-spanning segment. The Cytoplasmic segment spans residues glutamine 346–alanine 361. A helical transmembrane segment spans residues leucine 362–isoleucine 382. At leucine 383–aspartate 394 the chain is on the periplasmic side. A helical transmembrane segment spans residues alanine 395 to leucine 415. At arginine 416–histidine 429 the chain is on the cytoplasmic side.

Belongs to the major facilitator superfamily. Phthalate permease family.

The protein localises to the cell inner membrane. This Escherichia coli (strain K12) protein is Inner membrane transport protein RhmT (rhmT).